We begin with the raw amino-acid sequence, 346 residues long: C5a anaphylatoxin chemotactic receptor 1 (346 aa).

Topologically, residues 1–33 (MDDNNSDWTSYDFGNDTIPSPNEISLSHIGTRH) are extracellular. N-linked (GlcNAc...) asparagine glycans are attached at residues asparagine 4 and asparagine 15. A helical transmembrane segment spans residues 34–60 (WITLVCYGIVFLLGVPGNALVVWVTGF). The Cytoplasmic segment spans residues 61 to 65 (RMPNS). A helical membrane pass occupies residues 66 to 89 (VNAQWFLNLAIADLLCCLSLPILM). The Extracellular segment spans residues 90–106 (VPLAQDQHWPFGALACK). The cysteines at positions 105 and 183 are disulfide-linked. Residues 107–128 (LFSGIFYMMMYCSVLLLVVISL) traverse the membrane as a helical segment. The Cytoplasmic segment spans residues 129-149 (DRFLLVTKPVWCQNNRQPRQA). Residues 150-170 (RILCFIIWILGLLGSSPYFAH) form a helical membrane-spanning segment. The Extracellular segment spans residues 171-194 (MEIQHHSETKTVCTGSYSSLGHAW). Residues 195-220 (AITIIRSFLFFLLPFLIICISHWKVY) traverse the membrane as a helical segment. The Cytoplasmic portion of the chain corresponds to 221–238 (HMTSSGRRQRDKSSRTLR). The helical transmembrane segment at 239-261 (VILALVLGFFLCWTPLHIVDLLI) threads the bilayer. Topologically, residues 262–279 (LVSDQPSERFEVNLNLAH) are extracellular. Residues 280–300 (VLTLCLAYINSCLNPLLYVCL) form a helical membrane-spanning segment. The Cytoplasmic portion of the chain corresponds to 301-346 (GRGFKENLISSLRSVLHFASEAPTHGPSMTTNSKSTTDGVFREKPV). The interval 323 to 346 (PTHGPSMTTNSKSTTDGVFREKPV) is disordered. Over residues 327–338 (PSMTTNSKSTTD) the composition is skewed to polar residues.

This sequence belongs to the G-protein coupled receptor 1 family.

Its subcellular location is the cell membrane. In terms of biological role, receptor for the chemotactic and inflammatory peptide anaphylatoxin C5a. This receptor stimulates chemotaxis, granule enzyme release and superoxide anion production. The sequence is that of C5a anaphylatoxin chemotactic receptor 1 (c5ar1) from Danio rerio (Zebrafish).